The sequence spans 404 residues: Argininosuccinate synthase (404 aa).

Residues 12-20 (AYSGGLDTS) and Ala39 contribute to the ATP site. Residues Tyr91 and Ser96 each coordinate L-citrulline. Gly121 serves as a coordination point for ATP. L-aspartate contacts are provided by Thr123, Asn127, and Asp128. Asn127 serves as a coordination point for L-citrulline. 5 residues coordinate L-citrulline: Arg131, Ser180, Ser189, Glu265, and Tyr277.

The protein belongs to the argininosuccinate synthase family. Type 1 subfamily. In terms of assembly, homotetramer.

It localises to the cytoplasm. The catalysed reaction is L-citrulline + L-aspartate + ATP = 2-(N(omega)-L-arginino)succinate + AMP + diphosphate + H(+). Its pathway is amino-acid biosynthesis; L-arginine biosynthesis; L-arginine from L-ornithine and carbamoyl phosphate: step 2/3. The protein is Argininosuccinate synthase of Vibrio campbellii (strain ATCC BAA-1116).